The chain runs to 159 residues: MAGTIEVLVPGGKANPGPPLGPELGPTPVDVQDVVNDINDQTAAFDGMEVPVTVEYDDDGSFSIEVGVPPTAALIKDEVGFDTGSGEPQENFVADMSIEQLKKVAEQKSSDLLSYDLKNASKEVAGTCASLGVTIEGEDARTFKQRIDGGDFDDYFDDE.

A disordered region spans residues 1 to 26; it reads MAGTIEVLVPGGKANPGPPLGPELGP.

This sequence belongs to the universal ribosomal protein uL11 family. Part of the ribosomal stalk of the 50S ribosomal subunit. Interacts with L10 and the large rRNA to form the base of the stalk. L10 forms an elongated spine to which L12 dimers bind in a sequential fashion forming a multimeric L10(L12)X complex.

Forms part of the ribosomal stalk which helps the ribosome interact with GTP-bound translation factors. The protein is Large ribosomal subunit protein uL11 of Haloferax volcanii (strain ATCC 29605 / DSM 3757 / JCM 8879 / NBRC 14742 / NCIMB 2012 / VKM B-1768 / DS2) (Halobacterium volcanii).